The sequence spans 66 residues: Large ribosomal subunit protein uL29 (66 aa).

Belongs to the universal ribosomal protein uL29 family.

This Nitrosococcus oceani (strain ATCC 19707 / BCRC 17464 / JCM 30415 / NCIMB 11848 / C-107) protein is Large ribosomal subunit protein uL29.